We begin with the raw amino-acid sequence, 149 residues long: Calmodulin (149 aa).

4 EF-hand domains span residues 8 to 43 (EQIS…LGQN), 44 to 79 (PTEA…KMQD), 81 to 116 (DSEE…LGEK), and 117 to 149 (LTDE…MMSK). Aspartate 21, aspartate 23, aspartate 25, threonine 27, glutamate 32, aspartate 57, aspartate 59, serine 61, threonine 63, glutamate 68, aspartate 94, aspartate 96, asparagine 98, and glutamate 105 together coordinate Ca(2+). Lysine 116 carries the N6,N6,N6-trimethyllysine modification. Ca(2+) contacts are provided by aspartate 130, aspartate 132, aspartate 134, glutamine 136, and glutamate 141.

This sequence belongs to the calmodulin family.

Functionally, calmodulin mediates the control of a large number of enzymes, ion channels and other proteins by Ca(2+). Among the enzymes to be stimulated by the calmodulin-Ca(2+) complex are a number of protein kinases and phosphatases. In Trypanosoma brucei brucei, this protein is Calmodulin.